The chain runs to 163 residues: Small ribosomal subunit protein uS5 (163 aa).

An S5 DRBM domain is found at 8-71 (LIEKIVDLNR…ERAKKGMVQV (64 aa)).

The protein belongs to the universal ribosomal protein uS5 family. In terms of assembly, part of the 30S ribosomal subunit. Contacts proteins S4 and S8.

With S4 and S12 plays an important role in translational accuracy. In terms of biological role, located at the back of the 30S subunit body where it stabilizes the conformation of the head with respect to the body. In Oleidesulfovibrio alaskensis (strain ATCC BAA-1058 / DSM 17464 / G20) (Desulfovibrio alaskensis), this protein is Small ribosomal subunit protein uS5.